Here is a 692-residue protein sequence, read N- to C-terminus: Glycine--tRNA ligase beta subunit (692 aa).

It belongs to the class-II aminoacyl-tRNA synthetase family. As to quaternary structure, tetramer of two alpha and two beta subunits.

The protein resides in the cytoplasm. It catalyses the reaction tRNA(Gly) + glycine + ATP = glycyl-tRNA(Gly) + AMP + diphosphate. The protein is Glycine--tRNA ligase beta subunit of Alteromonas mediterranea (strain DSM 17117 / CIP 110805 / LMG 28347 / Deep ecotype).